The following is an 882-amino-acid chain: Pyruvate dehydrogenase E1 component (882 aa).

Homodimer. Part of the PDH complex, consisting of multiple copies of pyruvate dehydrogenase (E1), dihydrolipoamide acetyltransferase (E2) and lipoamide dehydrogenase (E3). The cofactor is thiamine diphosphate.

The enzyme catalyses N(6)-[(R)-lipoyl]-L-lysyl-[protein] + pyruvate + H(+) = N(6)-[(R)-S(8)-acetyldihydrolipoyl]-L-lysyl-[protein] + CO2. In terms of biological role, component of the pyruvate dehydrogenase (PDH) complex, that catalyzes the overall conversion of pyruvate to acetyl-CoA and CO(2). In Pseudomonas aeruginosa (strain ATCC 15692 / DSM 22644 / CIP 104116 / JCM 14847 / LMG 12228 / 1C / PRS 101 / PAO1), this protein is Pyruvate dehydrogenase E1 component (aceE).